A 417-amino-acid chain; its full sequence is Hydrogen cyanide synthase subunit HcnC (417 aa).

The signal sequence occupies residues 1–18 (MIKHYDVVIAGGGVIGAS). 7–21 (VVIAGGGVIGASCAY) provides a ligand contact to FAD. Residue Cys19 is the site of N-palmitoyl cysteine attachment. The S-diacylglycerol cysteine moiety is linked to residue Cys19. Residues 46 to 66 (SAGGLWAIGESVGLGCGVIFF) traverse the membrane as a helical segment.

The protein belongs to the FAD-dependent glycerol-3-phosphate dehydrogenase family. Heterotrimer of HcnA, HcnB and HcnC.

The protein resides in the cell membrane. The catalysed reaction is glycine + 2 A = hydrogen cyanide + 2 AH2 + CO2. In terms of biological role, a three-component membrane-bound flavoenzyme that catalyzes the formation of hydrogen cyanide, a secondary metabolite, by transfer of electrons to a cyanide-resistant branch of the aerobic respiratory chain. Contributes to suppression of black root rot of tobacco. This chain is Hydrogen cyanide synthase subunit HcnC, found in Pseudomonas protegens (strain DSM 19095 / LMG 27888 / CFBP 6595 / CHA0).